The sequence spans 222 residues: 7-cyano-7-deazaguanine synthase (222 aa).

11–21 (FSGGQDSTTCL) contacts ATP. Zn(2+)-binding residues include Cys187, Cys195, Cys198, and Cys201.

This sequence belongs to the QueC family. The cofactor is Zn(2+).

It carries out the reaction 7-carboxy-7-deazaguanine + NH4(+) + ATP = 7-cyano-7-deazaguanine + ADP + phosphate + H2O + H(+). It participates in purine metabolism; 7-cyano-7-deazaguanine biosynthesis. Catalyzes the ATP-dependent conversion of 7-carboxy-7-deazaguanine (CDG) to 7-cyano-7-deazaguanine (preQ(0)). This Actinobacillus pleuropneumoniae serotype 5b (strain L20) protein is 7-cyano-7-deazaguanine synthase.